A 392-amino-acid chain; its full sequence is Formate-dependent phosphoribosylglycinamide formyltransferase (392 aa).

N(1)-(5-phospho-beta-D-ribosyl)glycinamide is bound by residues 22–23 and Glu-82; that span reads EL. Residues Arg-114, Lys-155, 160–165, 195–198, and Glu-203 each bind ATP; these read SSGKGQ and EGVV. Residues 119-308 form the ATP-grasp domain; sequence RLAAEELGLP…EFALHVRAFL (190 aa). The Mg(2+) site is built by Glu-267 and Glu-279. N(1)-(5-phospho-beta-D-ribosyl)glycinamide contacts are provided by residues Asp-286, Lys-355, and 362–363; that span reads RR.

This sequence belongs to the PurK/PurT family. As to quaternary structure, homodimer.

It catalyses the reaction N(1)-(5-phospho-beta-D-ribosyl)glycinamide + formate + ATP = N(2)-formyl-N(1)-(5-phospho-beta-D-ribosyl)glycinamide + ADP + phosphate + H(+). Its pathway is purine metabolism; IMP biosynthesis via de novo pathway; N(2)-formyl-N(1)-(5-phospho-D-ribosyl)glycinamide from N(1)-(5-phospho-D-ribosyl)glycinamide (formate route): step 1/1. Its function is as follows. Involved in the de novo purine biosynthesis. Catalyzes the transfer of formate to 5-phospho-ribosyl-glycinamide (GAR), producing 5-phospho-ribosyl-N-formylglycinamide (FGAR). Formate is provided by PurU via hydrolysis of 10-formyl-tetrahydrofolate. The protein is Formate-dependent phosphoribosylglycinamide formyltransferase of Salmonella paratyphi A (strain ATCC 9150 / SARB42).